Reading from the N-terminus, the 220-residue chain is Probable septum site-determining protein MinC (220 aa).

It belongs to the MinC family. In terms of assembly, interacts with MinD and FtsZ.

Its function is as follows. Cell division inhibitor that blocks the formation of polar Z ring septums. Rapidly oscillates between the poles of the cell to destabilize FtsZ filaments that have formed before they mature into polar Z rings. Prevents FtsZ polymerization. The protein is Probable septum site-determining protein MinC of Photobacterium profundum (strain SS9).